The sequence spans 301 residues: uncharacterized protein (301 aa).

The a divalent metal cation site is built by E146, E148, and D177.

It belongs to the FAH family.

This is an uncharacterized protein from Staphylococcus haemolyticus (strain JCSC1435).